The following is a 278-amino-acid chain: Potassium/proton antiporter CemA (278 aa).

4 helical membrane-spanning segments follow: residues 61–81 (ILLL…FVFG), 155–175 (AVKN…LMIT), 203–223 (IILF…EVII), and 238–258 (FIFL…KYWI).

It belongs to the CemA family.

The protein resides in the plastid. It is found in the chloroplast inner membrane. The catalysed reaction is K(+)(in) + H(+)(out) = K(+)(out) + H(+)(in). Functionally, contributes to K(+)/H(+) antiport activity by supporting proton efflux to control proton extrusion and homeostasis in chloroplasts in a light-dependent manner to modulate photosynthesis. Prevents excessive induction of non-photochemical quenching (NPQ) under continuous-light conditions. Indirectly promotes efficient inorganic carbon uptake into chloroplasts. In Pyropia yezoensis (Susabi-nori), this protein is Potassium/proton antiporter CemA.